Here is a 670-residue protein sequence, read N- to C-terminus: MDRQQAKRRAAELRELLNRYGYEYYVLDRPSVPDAEYDRLMQELIAIEKQYPELKTSDSPTQRIGGPPLEAFRKVTHRVPMMSLANAFNEGDLRDFDRRVRQEVGEAAYVCELKIDGLAVSVRYEDGYFVQGATRGDGTTGEDITENLKTIRSLPLRLNEPVSLEARGEAFMPKASFLRLNEERQARGEELFANPRNAAAGSLRQLDPKVAASRQLDLFVYGLANAEELGIESHSAALSYLQSLGFKVNPERRRCATIDEVIAFVNEWKEKRPQLPYEIDGIVIKVDSFAQQRQLGATAKSPRWAIAYKFPAEEVVTTLIGIEVNVGRTGAVTPTAILEPVRVAGTTVQRATLHNEDFIREKDIRIGDAVIIKKAGDIIPEVVGVVVDRRDGDEVPFTMPTHCPECESELVRLDGEVALRCLNPKCPAQLRERLIHFASRSAMNIEGLGEKVVTQLFNAGLVHDVADLYQLTKEQLVGLERMGEKSAANLLAAIEASKQNSLERLLFGLGIRYVGAKAAQLLAEHFETMERLEAATKDELMAVPEIGEKMADSITTYFSQPEAVELLNELRTYGVNMAYKGRKRTAETPASSVLAGKTVVLTGKLASMSRNEAKEQIERLGGRVTGSVSRSTDIVIAGEDAGSKLDKAQQLGIEIWDETRFLQEISREEQ.

NAD(+) is bound by residues 34 to 38, 83 to 84, and Glu-112; these read DAEYD and SL. The N6-AMP-lysine intermediate role is filled by Lys-114. The NAD(+) site is built by Arg-135, Glu-169, Lys-285, and Lys-309. Residues Cys-403, Cys-406, Cys-421, and Cys-426 each coordinate Zn(2+). The BRCT domain occupies 589–670; sequence PASSVLAGKT…FLQEISREEQ (82 aa).

The protein belongs to the NAD-dependent DNA ligase family. LigA subfamily. Mg(2+) is required as a cofactor. It depends on Mn(2+) as a cofactor.

It carries out the reaction NAD(+) + (deoxyribonucleotide)n-3'-hydroxyl + 5'-phospho-(deoxyribonucleotide)m = (deoxyribonucleotide)n+m + AMP + beta-nicotinamide D-nucleotide.. DNA ligase that catalyzes the formation of phosphodiester linkages between 5'-phosphoryl and 3'-hydroxyl groups in double-stranded DNA using NAD as a coenzyme and as the energy source for the reaction. It is essential for DNA replication and repair of damaged DNA. This chain is DNA ligase, found in Geobacillus thermodenitrificans (strain NG80-2).